A 219-amino-acid polypeptide reads, in one-letter code: Chloramphenicol acetyltransferase (219 aa).

The Proton acceptor role is filled by His190.

Belongs to the chloramphenicol acetyltransferase family. Homotrimer.

It catalyses the reaction chloramphenicol + acetyl-CoA = chloramphenicol 3-acetate + CoA. Functionally, this enzyme is an effector of chloramphenicol resistance in bacteria. This Clostridium perfringens protein is Chloramphenicol acetyltransferase (catQ).